The following is a 266-amino-acid chain: Undecaprenyl-diphosphatase (266 aa).

8 helical membrane-spanning segments follow: residues 1–21, 39–59, 87–107, 117–137, 153–173, 189–209, 216–236, and 246–266; these read MEFF…FIPI, PGSS…FWYF, IFIG…FVPG, LSIA…DIST, YIGI…GATI, FSFL…FFSA, FPFL…LLAI, and HGLK…LFNL.

It belongs to the UppP family.

It localises to the cell inner membrane. It catalyses the reaction di-trans,octa-cis-undecaprenyl diphosphate + H2O = di-trans,octa-cis-undecaprenyl phosphate + phosphate + H(+). Its function is as follows. Catalyzes the dephosphorylation of undecaprenyl diphosphate (UPP). Confers resistance to bacitracin. In Prochlorococcus marinus subsp. pastoris (strain CCMP1986 / NIES-2087 / MED4), this protein is Undecaprenyl-diphosphatase.